The sequence spans 539 residues: Glucans biosynthesis protein D (539 aa).

Residues 1–31 (MHRRNLLKASMALAAYTGLSASGLLAARAWA) constitute a signal peptide (tat-type signal).

The protein belongs to the OpgD/OpgG family. Predicted to be exported by the Tat system. The position of the signal peptide cleavage has not been experimentally proven.

The protein resides in the periplasm. It participates in glycan metabolism; osmoregulated periplasmic glucan (OPG) biosynthesis. Functionally, probably involved in the control of the structural glucose backbone of osmoregulated periplasmic glucans (OPGs). The sequence is that of Glucans biosynthesis protein D from Pseudomonas fluorescens (strain ATCC BAA-477 / NRRL B-23932 / Pf-5).